A 131-amino-acid polypeptide reads, in one-letter code: UPF0102 protein YraN (131 aa).

The protein belongs to the UPF0102 family.

This Salmonella typhi protein is UPF0102 protein YraN.